We begin with the raw amino-acid sequence, 642 residues long: tRNA uridine 5-carboxymethylaminomethyl modification enzyme MnmG (642 aa).

An FAD-binding site is contributed by 24–29 (GGGHAG). 284 to 298 (GPRYCPSIEDKIHRF) lines the NAD(+) pocket.

It belongs to the MnmG family. Homodimer. Heterotetramer of two MnmE and two MnmG subunits. The cofactor is FAD.

The protein resides in the cytoplasm. NAD-binding protein involved in the addition of a carboxymethylaminomethyl (cmnm) group at the wobble position (U34) of certain tRNAs, forming tRNA-cmnm(5)s(2)U34. This Psychrobacter sp. (strain PRwf-1) protein is tRNA uridine 5-carboxymethylaminomethyl modification enzyme MnmG.